The chain runs to 376 residues: NifS-like protein (376 aa).

Pyridoxal 5'-phosphate contacts are provided by residues 58-59 (SE) and 184-186 (SLN).

The protein belongs to the class-V pyridoxal-phosphate-dependent aminotransferase family. NifS/IscS subfamily. Requires pyridoxal 5'-phosphate as cofactor.

It is found in the virion. The protein is NifS-like protein of African swine fever virus (isolate Tick/Malawi/Lil 20-1/1983) (ASFV).